We begin with the raw amino-acid sequence, 469 residues long: DENN domain-containing protein 2D (469 aa).

The disordered stretch occupies residues L17–P44. The region spanning E55–T204 is the uDENN domain. A cDENN domain is found at H226–G359. The dDENN domain occupies G361 to P445.

The protein resides in the cytoplasm. Functionally, guanine nucleotide exchange factor (GEF) which may activate RAB9A and RAB9B. Promotes the exchange of GDP to GTP, converting inactive GDP-bound Rab proteins into their active GTP-bound form. The chain is DENN domain-containing protein 2D (Dennd2d) from Mus musculus (Mouse).